Consider the following 88-residue polypeptide: Phosphocarrier protein HPr (88 aa).

The region spanning 1–88 (MASKEFHIVV…ETMTKEGLAE (88 aa)) is the HPr domain. His-15 functions as the Pros-phosphohistidine intermediate in the catalytic mechanism. Ser-46 carries the post-translational modification Phosphoserine; by HPrK/P.

The protein belongs to the HPr family.

Its subcellular location is the cytoplasm. Its activity is regulated as follows. Phosphorylation on Ser-46 inhibits the phosphoryl transfer from enzyme I to HPr. General (non sugar-specific) component of the phosphoenolpyruvate-dependent sugar phosphotransferase system (sugar PTS). This major carbohydrate active-transport system catalyzes the phosphorylation of incoming sugar substrates concomitantly with their translocation across the cell membrane. The phosphoryl group from phosphoenolpyruvate (PEP) is transferred to the phosphoryl carrier protein HPr by enzyme I. Phospho-HPr then transfers it to the PTS EIIA domain. Its function is as follows. P-Ser-HPr interacts with the catabolite control protein A (CcpA), forming a complex that binds to DNA at the catabolite response elements cre, operator sites preceding a large number of catabolite-regulated genes. Thus, P-Ser-HPr is a corepressor in carbon catabolite repression (CCR), a mechanism that allows bacteria to coordinate and optimize the utilization of available carbon sources. P-Ser-HPr also plays a role in inducer exclusion, in which it probably interacts with several non-PTS permeases and inhibits their transport activity. This Lactococcus lactis subsp. lactis (strain IL1403) (Streptococcus lactis) protein is Phosphocarrier protein HPr (ptsH).